Reading from the N-terminus, the 954-residue chain is Xylanolytic transcriptional activator xlnR (954 aa).

Disordered stretches follow at residues 1 to 39 and 51 to 93; these read MSTT…LAEG and REAA…SQRD. A compositionally biased stretch (low complexity) spans 8-21; that stretch reads HFPHSYSPFSSSRS. A compositionally biased stretch (polar residues) spans 22–33; the sequence is LNRMAQSQTSGL. The span at 64–78 shows a compositional bias: basic and acidic residues; it reads GKPKDQFQVDNDNHH. The span at 82-91 shows a compositional bias: polar residues; sequence SLSNFKNPSQ. The zn(2)-C6 fungal-type DNA-binding region spans 119-145; that stretch reads CDQCNQLRTKCDGQNPCAHCIDFGLTC. Disordered stretches follow at residues 173 to 226, 310 to 333, 566 to 607, and 758 to 777; these read ATNS…HSEA, LMNP…TENP, ELPP…PGNT, and MDGS…STVE. Residues 174–183 are compositionally biased toward polar residues; sequence TNSGQPNGSS. The span at 574 to 590 shows a compositional bias: basic and acidic residues; sequence ARPDAERDGDPDADLSK. Positions 764–777 are enriched in polar residues; it reads NHVSPSGRSSSTVE.

The protein belongs to the xlnR/xlr1 family.

It is found in the nucleus. Transcriptional activator of the xylanolytic system. Involved in the regulation of extracellular cellulolytic and xylanolytic genes and in the regulation of the intracellular activities of D-xylose catabolic genes in the pentose catabolic pathway (PCP) in response to the presence of D-xylose. This chain is Xylanolytic transcriptional activator xlnR (xlnR), found in Aspergillus fumigatus (strain ATCC MYA-4609 / CBS 101355 / FGSC A1100 / Af293) (Neosartorya fumigata).